The primary structure comprises 358 residues: Isopentenyl-diphosphate delta-isomerase (358 aa).

Residue 12–13 (RK) participates in substrate binding. FMN-binding positions include 69-71 (AMT), Ser99, and Asn128. Residue Gln158 participates in substrate binding. Residue Glu159 participates in Mg(2+) binding. Residues Lys190, Thr220, 267-269 (GIR), and 288-289 (AG) each bind FMN.

Belongs to the IPP isomerase type 2 family. In terms of assembly, homooctamer. Dimer of tetramers. The cofactor is FMN. Requires NADPH as cofactor. It depends on Mg(2+) as a cofactor.

The protein localises to the cytoplasm. It carries out the reaction isopentenyl diphosphate = dimethylallyl diphosphate. In terms of biological role, involved in the biosynthesis of isoprenoids. Catalyzes the 1,3-allylic rearrangement of the homoallylic substrate isopentenyl (IPP) to its allylic isomer, dimethylallyl diphosphate (DMAPP). The protein is Isopentenyl-diphosphate delta-isomerase of Listeria monocytogenes serotype 4a (strain HCC23).